The sequence spans 307 residues: Coproporphyrin III ferrochelatase (307 aa).

Residues Tyr12, Arg29, 45-46 (RY), Ser53, and Tyr124 each bind Fe-coproporphyrin III. Fe(2+) contacts are provided by His181 and Glu263.

The protein belongs to the ferrochelatase family.

The protein resides in the cytoplasm. It catalyses the reaction Fe-coproporphyrin III + 2 H(+) = coproporphyrin III + Fe(2+). The protein operates within porphyrin-containing compound metabolism; protoheme biosynthesis. Its function is as follows. Involved in coproporphyrin-dependent heme b biosynthesis. Catalyzes the insertion of ferrous iron into coproporphyrin III to form Fe-coproporphyrin III. It can also insert iron into protoporphyrin IX, but it has a much stronger preference for coproprophyrin III as the substrate. The sequence is that of Coproporphyrin III ferrochelatase from Staphylococcus aureus (strain NCTC 8325 / PS 47).